The chain runs to 428 residues: Serine--tRNA ligase (428 aa).

235–237 (TAE) contributes to the L-serine binding site. An ATP-binding site is contributed by 266-268 (RSE). Glu289 is an L-serine binding site. An ATP-binding site is contributed by 353-356 (EISS). Ser389 provides a ligand contact to L-serine.

The protein belongs to the class-II aminoacyl-tRNA synthetase family. Type-1 seryl-tRNA synthetase subfamily. In terms of assembly, homodimer. The tRNA molecule binds across the dimer.

It is found in the cytoplasm. The catalysed reaction is tRNA(Ser) + L-serine + ATP = L-seryl-tRNA(Ser) + AMP + diphosphate + H(+). It catalyses the reaction tRNA(Sec) + L-serine + ATP = L-seryl-tRNA(Sec) + AMP + diphosphate + H(+). It functions in the pathway aminoacyl-tRNA biosynthesis; selenocysteinyl-tRNA(Sec) biosynthesis; L-seryl-tRNA(Sec) from L-serine and tRNA(Sec): step 1/1. In terms of biological role, catalyzes the attachment of serine to tRNA(Ser). Is also able to aminoacylate tRNA(Sec) with serine, to form the misacylated tRNA L-seryl-tRNA(Sec), which will be further converted into selenocysteinyl-tRNA(Sec). This is Serine--tRNA ligase from Shewanella oneidensis (strain ATCC 700550 / JCM 31522 / CIP 106686 / LMG 19005 / NCIMB 14063 / MR-1).